A 311-amino-acid polypeptide reads, in one-letter code: Meteorin-like protein (311 aa).

The N-terminal stretch at 1 to 45 (MRGAVWAARRRAGQQWPRSPGPGPGPPPPPPLLLLLLLLLGGASA) is a signal peptide. A disulfide bridge connects residues Cys-52 and Cys-75. The N-linked (GlcNAc...) asparagine glycan is linked to Asn-103. Intrachain disulfides connect Cys-107–Cys-143, Cys-188–Cys-260, Cys-191–Cys-284, and Cys-201–Cys-306.

It belongs to the meteorin family. In terms of processing, N-glycosylated. In terms of tissue distribution, highly expressed in subcutaneous adipose tissue.

The protein localises to the secreted. Its function is as follows. Hormone induced following exercise or cold exposure that promotes energy expenditure. Induced either in the skeletal muscle after exercise or in adipose tissue following cold exposure and is present in the circulation. Able to stimulate energy expenditure associated with the browning of the white fat depots and improves glucose tolerance. Does not promote an increase in a thermogenic gene program via direct action on adipocytes, but acts by stimulating several immune cell subtypes to enter the adipose tissue and activate their prothermogenic actions. Stimulates an eosinophil-dependent increase in IL4 expression and promotes alternative activation of adipose tissue macrophages, which are required for the increased expression of the thermogenic and anti-inflammatory gene programs in fat. Required for some cold-induced thermogenic responses, suggesting a role in metabolic adaptations to cold temperatures. This chain is Meteorin-like protein (Metrnl), found in Mus musculus (Mouse).